The chain runs to 509 residues: tRNA (guanine(37)-N(1))-methyltransferase (509 aa).

S-adenosyl-L-methionine-binding positions include histidine 289, 327–328 (DL), 355–356 (DG), and asparagine 387. Positions 478–509 (TRNPENHEDPPLKRQRTAEAFSDEKTQIVSNT) are disordered.

This sequence belongs to the class I-like SAM-binding methyltransferase superfamily. TRM5/TYW2 family. In terms of assembly, monomer.

It localises to the mitochondrion matrix. The protein localises to the nucleus. The protein resides in the cytoplasm. It carries out the reaction guanosine(37) in tRNA + S-adenosyl-L-methionine = N(1)-methylguanosine(37) in tRNA + S-adenosyl-L-homocysteine + H(+). In terms of biological role, involved in mitochondrial tRNA methylation. Specifically methylates the N1 position of guanosine-37 in various tRNAs. Methylation is not dependent on the nature of the nucleoside 5' of the target nucleoside. This is the first step in the biosynthesis of wybutosine (yW), a modified base adjacent to the anticodon of tRNAs and required for accurate decoding. This Homo sapiens (Human) protein is tRNA (guanine(37)-N(1))-methyltransferase.